The sequence spans 268 residues: Tryptophan synthase alpha chain (268 aa).

Catalysis depends on proton acceptor residues E49 and D60.

The protein belongs to the TrpA family. As to quaternary structure, tetramer of two alpha and two beta chains.

It catalyses the reaction (1S,2R)-1-C-(indol-3-yl)glycerol 3-phosphate + L-serine = D-glyceraldehyde 3-phosphate + L-tryptophan + H2O. Its pathway is amino-acid biosynthesis; L-tryptophan biosynthesis; L-tryptophan from chorismate: step 5/5. Its function is as follows. The alpha subunit is responsible for the aldol cleavage of indoleglycerol phosphate to indole and glyceraldehyde 3-phosphate. This chain is Tryptophan synthase alpha chain, found in Escherichia coli O7:K1 (strain IAI39 / ExPEC).